The following is a 215-amino-acid chain: Cytochrome b6 (215 aa).

The chain crosses the membrane as a helical span at residues 32–52 (IFHCLGGITLTCFLVQVATGF). Cysteine 35 provides a ligand contact to heme c. Residues histidine 86 and histidine 100 each contribute to the heme b site. 3 helical membrane passes run 90-110 (ASMMVLMMILHVFRVYLTGGF), 116-136 (LTWVTGVVLAVLTASFGVTGY), and 186-206 (LHTFVLPLLTAVFMLMHFPMI). Histidine 187 and histidine 202 together coordinate heme b.

This sequence belongs to the cytochrome b family. PetB subfamily. As to quaternary structure, the 4 large subunits of the cytochrome b6-f complex are cytochrome b6, subunit IV (17 kDa polypeptide, PetD), cytochrome f and the Rieske protein, while the 4 small subunits are PetG, PetL, PetM and PetN. The complex functions as a dimer. Heme b serves as cofactor. The cofactor is heme c.

It localises to the plastid. It is found in the chloroplast thylakoid membrane. Its function is as follows. Component of the cytochrome b6-f complex, which mediates electron transfer between photosystem II (PSII) and photosystem I (PSI), cyclic electron flow around PSI, and state transitions. The protein is Cytochrome b6 of Amborella trichopoda.